Consider the following 714-residue polypeptide: Protein ESC8 (714 aa).

Disordered regions lie at residues 598-674 and 694-714; these read APTG…ELHN and RQLQ…RKGL. Over residues 610–624 the composition is skewed to polar residues; sequence TSSQRRTTVHYSSDV. Residues 628–650 are compositionally biased toward acidic residues; that stretch reads VSEESENEVDIDVSDDYDSEYLS. The segment covering 654–674 has biased composition (basic and acidic residues); that stretch reads TLTRKGEDRTDKSFGKRELHN. Over residues 704-714 the composition is skewed to basic residues; the sequence is RSLRRNARKGL.

As to quaternary structure, interacts with GAL11 and SIR2.

It localises to the cytoplasm. It is found in the nucleus. In terms of biological role, involved in HMR and telomere silencing via the recruitment or stabilizing of the SIR (silent information regulators) complex. This Saccharomyces cerevisiae (strain ATCC 204508 / S288c) (Baker's yeast) protein is Protein ESC8 (ESC8).